The sequence spans 373 residues: Centrosomal protein of 41 kDa (373 aa).

A disordered region spans residues 89-137; the sequence is QRLEDNDSAASDPDAETTARTNGKGNPGEQSPSPEQFINNAGAGDSSRS. 2 positions are modified to phosphoserine: S96 and S99. Over residues 106–127 the composition is skewed to polar residues; the sequence is TARTNGKGNPGEQSPSPEQFIN. At T109 the chain carries Phosphothreonine. Residue S121 is modified to Phosphoserine. Residues 169–266 form the Rhodanese domain; that stretch reads PDCPFLLLDV…LAQKFPEGLI (98 aa). A disordered region spans residues 275-373; the sequence is QQALPPGSAR…SGHLQGKPWK (99 aa). Positions 298 to 312 are enriched in basic and acidic residues; it reads NKWRFTPEDLKKIEY. R343 is modified (omega-N-methylarginine). A compositionally biased stretch (polar residues) spans 355-366; sequence SHSNPRSLSSGH.

The protein belongs to the CEP41 family. Found in a complex with TTLL6. In terms of tissue distribution, expressed in testis and fetal tissues.

Its subcellular location is the cytoplasm. The protein resides in the cytoskeleton. The protein localises to the microtubule organizing center. It localises to the centrosome. It is found in the cell projection. Its subcellular location is the cilium. The protein resides in the cilium basal body. Its function is as follows. Required during ciliogenesis for tubulin glutamylation in cilium. Probably acts by participating in the transport of TTLL6, a tubulin polyglutamylase, between the basal body and the cilium. The sequence is that of Centrosomal protein of 41 kDa (CEP41) from Homo sapiens (Human).